Here is a 101-residue protein sequence, read N- to C-terminus: Large ribosomal subunit protein bL21 (101 aa).

It belongs to the bacterial ribosomal protein bL21 family. In terms of assembly, part of the 50S ribosomal subunit. Contacts protein L20.

Functionally, this protein binds to 23S rRNA in the presence of protein L20. In Corynebacterium aurimucosum (strain ATCC 700975 / DSM 44827 / CIP 107346 / CN-1) (Corynebacterium nigricans), this protein is Large ribosomal subunit protein bL21.